Consider the following 147-residue polypeptide: UPF0178 protein AFE_3267 (147 aa).

The protein belongs to the UPF0178 family.

This chain is UPF0178 protein AFE_3267, found in Acidithiobacillus ferrooxidans (strain ATCC 23270 / DSM 14882 / CIP 104768 / NCIMB 8455) (Ferrobacillus ferrooxidans (strain ATCC 23270)).